The following is a 463-amino-acid chain: Elongation factor 1-alpha 2 (463 aa).

The residue at position 2 (glycine 2) is a N,N,N-trimethylglycine. One can recognise a tr-type G domain in the interval 5–242 (KTHINIVVIG…DTILPPTRPT (238 aa)). Positions 14-21 (GHVDSGKS) are G1. The GTP site is built by aspartate 17, serine 18, glycine 19, lysine 20, serine 21, and threonine 22. Aspartate 17 provides a ligand contact to Mg(2+). Lysine 36 is subject to N6,N6,N6-trimethyllysine; alternate. At lysine 36 the chain carries N6,N6-dimethyllysine; alternate. Lysine 36 is subject to N6-methyllysine; alternate. Position 55 is an N6,N6,N6-trimethyllysine (lysine 55). The residue at position 55 (lysine 55) is an N6,N6-dimethyllysine. The G2 stretch occupies residues 70–74 (GITID). Residue lysine 79 is modified to N6,N6,N6-trimethyllysine. The tract at residues 91 to 94 (DAPG) is G3. Asparagine 153, lysine 154, and aspartate 156 together coordinate GTP. Residues 153–156 (NKMD) are G4. Serine 163 carries the post-translational modification Phosphoserine. Lysine 165 bears the N6,N6-dimethyllysine; alternate mark. N6-methyllysine; alternate is present on lysine 165. Lysine 165 bears the N6,N6,N6-trimethyllysine; alternate; by EEF1AKMT3 mark. Lysine 179 bears the N6-acetyllysine mark. Positions 194, 195, and 196 each coordinate GTP. The tract at residues 194–196 (SGW) is G5. Serine 224 carries the post-translational modification Phosphoserine. At threonine 239 the chain carries Phosphothreonine. Glutamate 301 and glutamate 374 each carry 5-glutamyl glycerylphosphorylethanolamine. Lysine 439 carries the post-translational modification N6-acetyllysine. A disordered region spans residues 444–463 (KSGGAGKVTKSAQKAQKAGK).

Belongs to the TRAFAC class translation factor GTPase superfamily. Classic translation factor GTPase family. EF-Tu/EF-1A subfamily. Homodimer; arranged in a 'head to tail' dimer configuration. Post-translationally, trimethylated at Lys-165 by EEF1AKMT3. Mono-, di-, and trimethylated at Lys-36 by EEF1AKMT4; trimethylated form is predominant. Methylation by EEF1AKMT4 contributes to the fine-tuning of translation rates for a subset of tRNAs. Trimethylated at the N-terminus and dimethylated at Lys-55 by METTL13.

The protein resides in the endoplasmic reticulum membrane. The catalysed reaction is GTP + H2O = GDP + phosphate + H(+). In terms of biological role, translation elongation factor that catalyzes the GTP-dependent binding of aminoacyl-tRNA (aa-tRNA) to the A-site of ribosomes during the elongation phase of protein synthesis. Base pairing between the mRNA codon and the aa-tRNA anticodon promotes GTP hydrolysis, releasing the aa-tRNA from EEF1A1 and allowing its accommodation into the ribosome. The growing protein chain is subsequently transferred from the P-site peptidyl tRNA to the A-site aa-tRNA, extending it by one amino acid through ribosome-catalyzed peptide bond formation. This chain is Elongation factor 1-alpha 2 (Eef1a2), found in Rattus norvegicus (Rat).